The following is a 326-amino-acid chain: DNA-directed RNA polymerase subunit alpha (326 aa).

The alpha N-terminal domain (alpha-NTD) stretch occupies residues 1 to 231 (MQTALLKPKI…DQLSVFAALE (231 aa)). The alpha C-terminal domain (alpha-CTD) stretch occupies residues 247-326 (IDPILLRPVD…ENWPPAGLDK (80 aa)).

It belongs to the RNA polymerase alpha chain family. As to quaternary structure, homodimer. The RNAP catalytic core consists of 2 alpha, 1 beta, 1 beta' and 1 omega subunit. When a sigma factor is associated with the core the holoenzyme is formed, which can initiate transcription.

It catalyses the reaction RNA(n) + a ribonucleoside 5'-triphosphate = RNA(n+1) + diphosphate. DNA-dependent RNA polymerase catalyzes the transcription of DNA into RNA using the four ribonucleoside triphosphates as substrates. In Cupriavidus pinatubonensis (strain JMP 134 / LMG 1197) (Cupriavidus necator (strain JMP 134)), this protein is DNA-directed RNA polymerase subunit alpha.